Reading from the N-terminus, the 132-residue chain is Urease subunit beta (132 aa).

Belongs to the urease beta subunit family. Heterotrimer of UreA (gamma), UreB (beta) and UreC (alpha) subunits. Three heterotrimers associate to form the active enzyme.

The protein localises to the cytoplasm. It carries out the reaction urea + 2 H2O + H(+) = hydrogencarbonate + 2 NH4(+). Its pathway is nitrogen metabolism; urea degradation; CO(2) and NH(3) from urea (urease route): step 1/1. In Natronomonas pharaonis (strain ATCC 35678 / DSM 2160 / CIP 103997 / JCM 8858 / NBRC 14720 / NCIMB 2260 / Gabara) (Halobacterium pharaonis), this protein is Urease subunit beta.